A 170-amino-acid polypeptide reads, in one-letter code: Peptide deformylase (170 aa).

Fe cation-binding residues include Cys91 and His133. Glu134 is a catalytic residue. Position 137 (His137) interacts with Fe cation.

The protein belongs to the polypeptide deformylase family. Fe(2+) is required as a cofactor.

The catalysed reaction is N-terminal N-formyl-L-methionyl-[peptide] + H2O = N-terminal L-methionyl-[peptide] + formate. Removes the formyl group from the N-terminal Met of newly synthesized proteins. Requires at least a dipeptide for an efficient rate of reaction. N-terminal L-methionine is a prerequisite for activity but the enzyme has broad specificity at other positions. The sequence is that of Peptide deformylase from Yersinia enterocolitica serotype O:8 / biotype 1B (strain NCTC 13174 / 8081).